The following is a 508-amino-acid chain: Photosystem II CP47 reaction center protein (508 aa).

The next 6 membrane-spanning stretches (helical) occupy residues 21-36 (AVHIMHTALVSGWAGS), 101-115 (IVFSGLCFLAAIWHW), 140-156 (GIHLFLAGVACFGFGAF), 203-218 (IAAGTLGILAGLFHLS), 237-252 (VLSSSIAAVFFAAFVV), and 457-472 (TFALLFFFGHIWHGAR).

This sequence belongs to the PsbB/PsbC family. PsbB subfamily. In terms of assembly, PSII is composed of 1 copy each of membrane proteins PsbA, PsbB, PsbC, PsbD, PsbE, PsbF, PsbH, PsbI, PsbJ, PsbK, PsbL, PsbM, PsbT, PsbX, PsbY, PsbZ, Psb30/Ycf12, at least 3 peripheral proteins of the oxygen-evolving complex and a large number of cofactors. It forms dimeric complexes. Binds multiple chlorophylls. PSII binds additional chlorophylls, carotenoids and specific lipids. serves as cofactor.

It is found in the plastid. It localises to the chloroplast thylakoid membrane. One of the components of the core complex of photosystem II (PSII). It binds chlorophyll and helps catalyze the primary light-induced photochemical processes of PSII. PSII is a light-driven water:plastoquinone oxidoreductase, using light energy to abstract electrons from H(2)O, generating O(2) and a proton gradient subsequently used for ATP formation. This chain is Photosystem II CP47 reaction center protein, found in Secale cereale (Rye).